A 62-amino-acid chain; its full sequence is Large ribosomal subunit protein eL24 (62 aa).

The Zn(2+) site is built by Cys6, Cys9, Cys32, and Cys36. A C4-type zinc finger spans residues 6 to 36; that stretch reads CYFCGQMLEPGTGKLYIKKDGSTYFMCSSKC.

It belongs to the eukaryotic ribosomal protein eL24 family. In terms of assembly, part of the 50S ribosomal subunit. Forms a cluster with proteins L3 and L14. Zn(2+) is required as a cofactor.

Binds to the 23S rRNA. The chain is Large ribosomal subunit protein eL24 from Methanosarcina mazei (strain ATCC BAA-159 / DSM 3647 / Goe1 / Go1 / JCM 11833 / OCM 88) (Methanosarcina frisia).